The sequence spans 207 residues: Large ribosomal subunit protein uL4 (207 aa).

The interval 45–89 (RQGTHKVKTRSEVRGGGRKPWRQKGTGRARQGSIRSPQWRGGGTV) is disordered. Residues 60-71 (GGRKPWRQKGTG) are compositionally biased toward basic residues.

The protein belongs to the universal ribosomal protein uL4 family. As to quaternary structure, part of the 50S ribosomal subunit.

One of the primary rRNA binding proteins, this protein initially binds near the 5'-end of the 23S rRNA. It is important during the early stages of 50S assembly. It makes multiple contacts with different domains of the 23S rRNA in the assembled 50S subunit and ribosome. Its function is as follows. Forms part of the polypeptide exit tunnel. This chain is Large ribosomal subunit protein uL4, found in Bacillus mycoides (strain KBAB4) (Bacillus weihenstephanensis).